Consider the following 901-residue polypeptide: Viral-enhancing factor (901 aa).

Residues 27–330 (HRRTEVGVVL…IFTWLYNPQR (304 aa)) enclose the Peptidase M60 domain. N-linked (GlcNAc...) asparagine; by host glycosylation is found at asparagine 265, asparagine 278, asparagine 339, asparagine 349, asparagine 540, asparagine 594, asparagine 595, asparagine 642, asparagine 683, and asparagine 698.

In terms of biological role, involved in disruption of the peritrophic membrane and fusion of nucleocapsids with midgut cells. The protein is Viral-enhancing factor (VEF) of Pseudalatia unipuncta granulosis virus (PuGV).